We begin with the raw amino-acid sequence, 334 residues long: Protein-methionine-sulfoxide reductase catalytic subunit MsrP (334 aa).

A signal peptide (tat-type signal) is located at residues 1-44; it reads MKKNQFLKESDVTAESVFFMKRRQVLKALGISAAALSLPHAAHA. Residues Asn88, 91–92, Cys146, Thr181, Asn233, Arg238, and 249–251 each bind Mo-molybdopterin; these read YE and GIK.

This sequence belongs to the MsrP family. In terms of assembly, heterodimer of a catalytic subunit (MsrP) and a heme-binding subunit (MsrQ). Requires Mo-molybdopterin as cofactor. In terms of processing, predicted to be exported by the Tat system. The position of the signal peptide cleavage has not been experimentally proven.

It localises to the periplasm. The catalysed reaction is L-methionyl-[protein] + a quinone + H2O = L-methionyl-(S)-S-oxide-[protein] + a quinol. It carries out the reaction L-methionyl-[protein] + a quinone + H2O = L-methionyl-(R)-S-oxide-[protein] + a quinol. In terms of biological role, part of the MsrPQ system that repairs oxidized periplasmic proteins containing methionine sulfoxide residues (Met-O), using respiratory chain electrons. Thus protects these proteins from oxidative-stress damage caused by reactive species of oxygen and chlorine generated by the host defense mechanisms. MsrPQ is essential for the maintenance of envelope integrity under bleach stress, rescuing a wide series of structurally unrelated periplasmic proteins from methionine oxidation, including the primary periplasmic chaperone SurA and the lipoprotein Pal. The catalytic subunit MsrP is non-stereospecific, being able to reduce both (R-) and (S-) diastereoisomers of methionine sulfoxide. In Escherichia coli O81 (strain ED1a), this protein is Protein-methionine-sulfoxide reductase catalytic subunit MsrP.